The following is a 265-amino-acid chain: Hydroxyethylthiazole kinase (265 aa).

Residue Met-50 coordinates substrate. ATP-binding residues include Arg-125 and Thr-171. A substrate-binding site is contributed by Gly-198.

Belongs to the Thz kinase family. It depends on Mg(2+) as a cofactor.

The enzyme catalyses 5-(2-hydroxyethyl)-4-methylthiazole + ATP = 4-methyl-5-(2-phosphooxyethyl)-thiazole + ADP + H(+). The protein operates within cofactor biosynthesis; thiamine diphosphate biosynthesis; 4-methyl-5-(2-phosphoethyl)-thiazole from 5-(2-hydroxyethyl)-4-methylthiazole: step 1/1. Catalyzes the phosphorylation of the hydroxyl group of 4-methyl-5-beta-hydroxyethylthiazole (THZ). In Cronobacter sakazakii (strain ATCC BAA-894) (Enterobacter sakazakii), this protein is Hydroxyethylthiazole kinase.